The primary structure comprises 417 residues: Histidine--tRNA ligase (417 aa).

It belongs to the class-II aminoacyl-tRNA synthetase family. As to quaternary structure, homodimer.

It localises to the cytoplasm. The enzyme catalyses tRNA(His) + L-histidine + ATP = L-histidyl-tRNA(His) + AMP + diphosphate + H(+). This is Histidine--tRNA ligase from Oleidesulfovibrio alaskensis (strain ATCC BAA-1058 / DSM 17464 / G20) (Desulfovibrio alaskensis).